Consider the following 226-residue polypeptide: Probable chemoreceptor glutamine deamidase CheD (226 aa).

It belongs to the CheD family.

The enzyme catalyses L-glutaminyl-[protein] + H2O = L-glutamyl-[protein] + NH4(+). In terms of biological role, probably deamidates glutamine residues to glutamate on methyl-accepting chemotaxis receptors (MCPs), playing an important role in chemotaxis. The protein is Probable chemoreceptor glutamine deamidase CheD of Bordetella avium (strain 197N).